Reading from the N-terminus, the 106-residue chain is Insulin-like peptide 03 (106 aa).

Residues 1 to 18 (MLFYFGLAVIFLIDSSQT) form the signal peptide. A propeptide spanning residues 19 to 34 (QTLYKVNEVGGSQVDR) is cleaved from the precursor. Intrachain disulfides connect Cys37–Cys93, Cys49–Cys106, and Cys92–Cys97. A propeptide spans 52-82 (KKRQNIPRKYGRDPNNILEKEEFAKRFLRVR) (c peptide).

This sequence belongs to the insulin family.

Its subcellular location is the secreted. In terms of biological role, insulin decreases blood glucose concentration. May have evolved to activate insulin receptors (INSR) in vertebrates. Molecular docking studies reveals unique interaction with the human insulin receptor. In vivo, insulin-like peptide injection reduces blood glucose levels in two models of zebrafish diabetes (streptozotocin- and glucose-induced). Also shorter swimming distance of zebrafish larvae, an effect which is not observed with human insulin. This chain is Insulin-like peptide 03, found in Exaiptasia diaphana (Tropical sea anemone).